The sequence spans 77 residues: U11-lycotoxin-Ls1a (77 aa).

Residues 1–20 form the signal peptide; sequence MKLIILTGLVLFAIVSFIEA. Positions 21–26 are excised as a propeptide; that stretch reads EEETGR.

Belongs to the neurotoxin 19 (CSTX) family. 10 (U11-Lctx) subfamily. Contains 4 disulfide bonds. Expressed by the venom gland.

The protein localises to the secreted. This Lycosa singoriensis (Wolf spider) protein is U11-lycotoxin-Ls1a.